We begin with the raw amino-acid sequence, 371 residues long: Probable beta-1,3-galactosyltransferase 12 (371 aa).

The tract at residues 1–36 is disordered; it reads MPLFSHRFTTASSSSPASPSYYNKPSSKTHKPNSSS. Residues 11-36 show a composition bias toward low complexity; sequence ASSSSPASPSYYNKPSSKTHKPNSSS. A helical; Signal-anchor for type II membrane protein membrane pass occupies residues 46–66; that stretch reads VAIIFFSLVSVFIGVAGTIFA. N-linked (GlcNAc...) asparagine glycosylation is present at N291.

The protein belongs to the glycosyltransferase 31 family. The cofactor is Mn(2+).

It localises to the golgi apparatus membrane. The protein operates within protein modification; protein glycosylation. Its function is as follows. Beta-1,3-galactosyltransferase that transfers galactose from UDP-galactose to substrates with a terminal glycosyl residue. This chain is Probable beta-1,3-galactosyltransferase 12 (B3GALT12), found in Arabidopsis thaliana (Mouse-ear cress).